The primary structure comprises 204 residues: Putative peroxiredoxin ycf42 (204 aa).

Residues 5–163 (PKIGKTPPNF…LLRILESIQY (159 aa)) enclose the Thioredoxin domain.

This sequence belongs to the peroxiredoxin family. AhpC/Prx1 subfamily.

It is found in the plastid. The protein localises to the chloroplast. The catalysed reaction is a hydroperoxide + [protein]-dithiol = [protein]-disulfide + an alcohol + H2O. This chain is Putative peroxiredoxin ycf42 (ycf42), found in Trieres chinensis (Marine centric diatom).